Consider the following 243-residue polypeptide: Clathrin light chain A (243 aa).

A Blocked amino end (Met) modification is found at methionine 1. Disordered stretches follow at residues 1 to 22 (MAELDPFGVPAGGPALGNGVAG) and 49 to 87 (ILDGGAPGSQPHGEPPGIPDAVDGVTNGDYYQESNGPTD). Gly residues predominate over residues 10–20 (PAGGPALGNGV). Residues 95 to 157 (VDRLQSEPES…QLQKTKANNR (63 aa)) form an involved in binding clathrin heavy chain region. Residues serine 100 and serine 201 each carry the phosphoserine modification. Lysine 218 is subject to N6-acetyllysine. Serine 231 carries the phosphoserine modification. Residue lysine 237 is modified to N6-acetyllysine.

This sequence belongs to the clathrin light chain family. Clathrin coats are formed from molecules containing 3 heavy chains and 3 light chains. Interacts with CALY; the interaction stimulates clathrin self-assembly and clathrin-mediated endocytosis. Interacts with CKAP5 and TACC3 forming the TACC3/ch-TOG/clathrin complex located at spindle inter-microtubules bridges; the complex implicates clathrin triskelions.

The protein resides in the cytoplasmic vesicle membrane. Its subcellular location is the membrane. It is found in the coated pit. It localises to the cytoplasm. The protein localises to the cytoskeleton. The protein resides in the spindle. Its function is as follows. Clathrin is the major protein of the polyhedral coat of coated pits and vesicles. Acts as a component of the TACC3/ch-TOG/clathrin complex proposed to contribute to stabilization of kinetochore fibers of the mitotic spindle by acting as inter-microtubule bridge. The polypeptide is Clathrin light chain A (CLTA) (Bos taurus (Bovine)).